Here is a 322-residue protein sequence, read N- to C-terminus: Protein-methionine-sulfoxide reductase catalytic subunit MsrP (322 aa).

The tat-type signal signal peptide spans 1–59 (MSFRDALNLPSSEITDESVYRDRRRLLQLLALTPALGVAGCAEADPPPPPKTVVTPAQA). Mo-molybdopterin is bound by residues N79, 82-83 (YE), C137, T172, N220, R225, and 236-238 (SIK).

Belongs to the MsrP family. As to quaternary structure, heterodimer of a catalytic subunit (MsrP) and a heme-binding subunit (MsrQ). Mo-molybdopterin is required as a cofactor. In terms of processing, predicted to be exported by the Tat system. The position of the signal peptide cleavage has not been experimentally proven.

It is found in the periplasm. It catalyses the reaction L-methionyl-[protein] + a quinone + H2O = L-methionyl-(S)-S-oxide-[protein] + a quinol. The enzyme catalyses L-methionyl-[protein] + a quinone + H2O = L-methionyl-(R)-S-oxide-[protein] + a quinol. Its function is as follows. Part of the MsrPQ system that repairs oxidized periplasmic proteins containing methionine sulfoxide residues (Met-O), using respiratory chain electrons. Thus protects these proteins from oxidative-stress damage caused by reactive species of oxygen and chlorine generated by the host defense mechanisms. MsrPQ is essential for the maintenance of envelope integrity under bleach stress, rescuing a wide series of structurally unrelated periplasmic proteins from methionine oxidation. The catalytic subunit MsrP is non-stereospecific, being able to reduce both (R-) and (S-) diastereoisomers of methionine sulfoxide. The protein is Protein-methionine-sulfoxide reductase catalytic subunit MsrP of Xanthomonas axonopodis pv. citri (strain 306).